Consider the following 768-residue polypeptide: Mitochondrial 15S rRNA processing factor CCM1 (768 aa).

The N-terminal 90 residues, 1–90 (MIRLIRWNNV…RSFTKVIAQH (90 aa)), are a transit peptide targeting the mitochondrion. Disordered regions lie at residues 28–65 (NKRK…NTGS) and 90–114 (HLKP…LPPI). Residues 43–53 (NRKDGDIEPYR) show a composition bias toward basic and acidic residues. The span at 55 to 65 (TDQNQTPNTGS) shows a compositional bias: polar residues. PPR repeat units follow at residues 274–308 (KIDH…NIEI), 309–344 (SKMI…SQKT), 347–381 (DEKV…GMNV), 382–417 (NQNL…GWVP), and 418–452 (NLQT…NSVT). Residues 583 to 596 (IEPRQDEPTEKATT) show a composition bias toward basic and acidic residues. The segment at 583-609 (IEPRQDEPTEKATTTEEQNASSETDNN) is disordered. Over residues 597 to 609 (TEEQNASSETDNN) the composition is skewed to polar residues. Residues 634–664 (DSYLYNLAIKAAGKFKNYGFAQEILHERGQF) form a PPR 6 repeat.

Belongs to the CCM1 family. In terms of assembly, binds to mitochondrial small subunit 15S rRNA.

Its subcellular location is the mitochondrion. Its function is as follows. Regulates mitochondrial small subunit maturation by controlling 15S rRNA 5'-end processing. Localizes to the 5' precursor of the 15S rRNA in a position that is subsequently occupied by mS47 in the mature yeast mtSSU. Uses structure and sequence-specific RNA recognition, binding to a single-stranded region of the precursor and specifically recognizing bases -6 to -1. The exchange of Ccm1 for mS47 is coupled to the irreversible removal of precursor rRNA that is accompanied by conformational changes of the mitoribosomal proteins uS5m and mS26. These conformational changes signal completion of 5'-end rRNA processing through protection of the mature 5'-end of the 15S rRNA and stabilization of mS47. The removal of the 5' precursor together with the dissociation of Ccm1 may be catalyzed by the 5'-3' exoribonuclease Pet127. Involved in the specific removal of group I introns in mitochondrial encoded transcripts. This is Mitochondrial 15S rRNA processing factor CCM1 (CCM1) from Candida albicans (strain SC5314 / ATCC MYA-2876) (Yeast).